The following is a 178-amino-acid chain: Large ribosomal subunit protein uL6 (178 aa).

Belongs to the universal ribosomal protein uL6 family. In terms of assembly, part of the 50S ribosomal subunit.

Its function is as follows. This protein binds to the 23S rRNA, and is important in its secondary structure. It is located near the subunit interface in the base of the L7/L12 stalk, and near the tRNA binding site of the peptidyltransferase center. This Leifsonia xyli subsp. xyli (strain CTCB07) protein is Large ribosomal subunit protein uL6.